The following is a 206-amino-acid chain: Synaptosomal-associated protein 25 (206 aa).

The span at 1-20 (MAEDADMRNELEEMQRRADQ) shows a compositional bias: basic and acidic residues. The tract at residues 1–25 (MAEDADMRNELEEMQRRADQLADES) is disordered. The interval 1–75 (MAEDADMRNE…QINKDMKEAE (75 aa)) is interaction with CENPF. The t-SNARE coiled-coil homology 1 domain maps to 19–81 (DQLADESLES…KEAEKNSTDL (63 aa)). Residues Cys85, Cys88, Cys90, and Cys92 are each lipidated (S-palmitoyl cysteine). Residues 111–120 (GVVASQPARV) form an interaction with ZDHHC17 region. Residue Thr138 is modified to Phosphothreonine. In terms of domain architecture, t-SNARE coiled-coil homology 2 spans 140–202 (DARENEMDEN…DEANQRATKM (63 aa)). 2 positions are modified to phosphoserine: Ser154 and Ser187.

The protein belongs to the SNAP-25 family. Part of the SNARE core complex containing SNAP25, VAMP2 and STX1A; this complex binds CPLX1. Found in a complex containing SYT1, SV2B and syntaxin-1. Found in a ternary complex with STX1A and VAMP8. Interacts with HSC70 and with SYT9, forming a complex with DNAJC5. The interaction with SYT9 is inhibited in presence of calcium. Isoform 1 and isoform 2 interact with BLOC1S6. Interacts with CENPF. Interacts with EQTN. Interacts with HGS. Interacts with KCNB1 (via N-terminus); reduces the voltage-dependent potassium channel KCNB1 activity in pancreatic beta cells. Interacts with OTOF. Interacts with RIMS1. Interacts with SNAPIN. Interacts with STXBP6. Interacts with TRIM9. Interacts with ZDHHC13 (via ANK repeats). Interacts with ZDHHC17 (via ANK repeats). Associates with the BLOC-1 complex. Interacts with PLCL1 (via C2 domain). Interacts with PRRT2; this interaction may impair the formation of the SNARE complex. Interacts with alpha-synuclein/SNCA. Interacts with PRPH2. Interacts with ROM1. Interacts with STX3. Post-translationally, palmitoylated. Cys-85 appears to be the main site, and palmitoylation is required for membrane association.

Its subcellular location is the cytoplasm. The protein localises to the perinuclear region. It is found in the cell membrane. The protein resides in the synapse. It localises to the synaptosome. Its subcellular location is the photoreceptor inner segment. Its function is as follows. t-SNARE involved in the molecular regulation of neurotransmitter release. May play an important role in the synaptic function of specific neuronal systems. Associates with proteins involved in vesicle docking and membrane fusion. Regulates plasma membrane recycling through its interaction with CENPF. Modulates the gating characteristics of the delayed rectifier voltage-dependent potassium channel KCNB1 in pancreatic beta cells. The sequence is that of Synaptosomal-associated protein 25 (SNAP25) from Pongo abelii (Sumatran orangutan).